The sequence spans 428 residues: Dihydroorotase (428 aa).

Zn(2+)-binding residues include His-60 and His-62. Substrate is bound by residues 62 to 64 (HLR) and Asn-94. Residues Asp-152, His-179, and His-232 each contribute to the Zn(2+) site. A substrate-binding site is contributed by Asn-278. Zn(2+) is bound at residue Asp-305. Asp-305 is an active-site residue. A substrate-binding site is contributed by His-309.

This sequence belongs to the metallo-dependent hydrolases superfamily. DHOase family. Class I DHOase subfamily. It depends on Zn(2+) as a cofactor.

It carries out the reaction (S)-dihydroorotate + H2O = N-carbamoyl-L-aspartate + H(+). The protein operates within pyrimidine metabolism; UMP biosynthesis via de novo pathway; (S)-dihydroorotate from bicarbonate: step 3/3. Its function is as follows. Catalyzes the reversible cyclization of carbamoyl aspartate to dihydroorotate. This is Dihydroorotase from Ruminiclostridium cellulolyticum (strain ATCC 35319 / DSM 5812 / JCM 6584 / H10) (Clostridium cellulolyticum).